The sequence spans 128 residues: uncharacterized protein (128 aa).

Residues methionine 1–threonine 26 are disordered. The chain crosses the membrane as a helical span at residues isoleucine 105 to valine 127.

Belongs to the flocculin family.

It is found in the membrane. This is an uncharacterized protein from Saccharomyces cerevisiae (strain ATCC 204508 / S288c) (Baker's yeast).